Here is a 183-residue protein sequence, read N- to C-terminus: uncharacterized protein (183 aa).

This sequence to A.muscaria DOPA 4,5-dioxygenase.

This is an uncharacterized protein from Botryotinia fuckeliana (Noble rot fungus).